The primary structure comprises 159 residues: uncharacterized protein (159 aa).

This is an uncharacterized protein from Methanocaldococcus jannaschii (strain ATCC 43067 / DSM 2661 / JAL-1 / JCM 10045 / NBRC 100440) (Methanococcus jannaschii).